Consider the following 808-residue polypeptide: DNA gyrase subunit B (808 aa).

One can recognise a Toprim domain in the interval 429-544; sequence SELFIVEGDS…KGYLYIAQPP (116 aa). The Mg(2+) site is built by Glu-435, Asp-509, and Asp-511.

Belongs to the type II topoisomerase GyrB family. Heterotetramer, composed of two GyrA and two GyrB chains. In the heterotetramer, GyrA contains the active site tyrosine that forms a transient covalent intermediate with DNA, while GyrB binds cofactors and catalyzes ATP hydrolysis. It depends on Mg(2+) as a cofactor. The cofactor is Mn(2+). Requires Ca(2+) as cofactor.

It is found in the cytoplasm. It catalyses the reaction ATP-dependent breakage, passage and rejoining of double-stranded DNA.. A type II topoisomerase that negatively supercoils closed circular double-stranded (ds) DNA in an ATP-dependent manner to modulate DNA topology and maintain chromosomes in an underwound state. Negative supercoiling favors strand separation, and DNA replication, transcription, recombination and repair, all of which involve strand separation. Also able to catalyze the interconversion of other topological isomers of dsDNA rings, including catenanes and knotted rings. Type II topoisomerases break and join 2 DNA strands simultaneously in an ATP-dependent manner. This chain is DNA gyrase subunit B, found in Rickettsia bellii (strain RML369-C).